The chain runs to 42 residues: Large ribosomal subunit protein bL36 (42 aa).

This sequence belongs to the bacterial ribosomal protein bL36 family.

The polypeptide is Large ribosomal subunit protein bL36 (Anaplasma phagocytophilum (strain HZ)).